Consider the following 255-residue polypeptide: Small ribosomal subunit protein eS1 (255 aa).

Residue A2 is modified to N-acetylalanine; partial.

Belongs to the eukaryotic ribosomal protein eS1 family. In terms of assembly, component of the small ribosomal subunit. Mature ribosomes consist of a small (40S) and a large (60S) subunit. The 40S subunit contains about 33 different proteins and 1 molecule of RNA (18S). The 60S subunit contains about 49 different proteins and 3 molecules of RNA (25S, 5.8S and 5S).

It localises to the cytoplasm. In Vanderwaltozyma polyspora (strain ATCC 22028 / DSM 70294 / BCRC 21397 / CBS 2163 / NBRC 10782 / NRRL Y-8283 / UCD 57-17) (Kluyveromyces polysporus), this protein is Small ribosomal subunit protein eS1.